The following is a 266-amino-acid chain: Short-chain dehydrogenase/reductase atnB (266 aa).

3 residues coordinate NADP(+): Ile-13, Asp-57, and Asn-85. Residues Ser-147 and Tyr-166 each act as proton donor in the active site. Residues Tyr-166, Lys-170, Val-199, and Thr-201 each contribute to the NADP(+) site. Lys-170 (lowers pKa of active site Tyr) is an active-site residue.

The protein belongs to the short-chain dehydrogenases/reductases (SDR) family.

Its pathway is secondary metabolite biosynthesis; terpenoid biosynthesis. Its function is as follows. Short-chain dehydrogenase/reductase; part of the gene cluster that mediates the biosynthesis of the meroterpenoids arthripenoids. The pathway begins with the HR-PKS atnH that catalyzes two chain-extension steps to form a reduced triketide, which then primes the SAT domain in the NR-PKS atnG to initiate three more cycles of extension to give a linear hexaketide corresponding to the polyketide part of arthripenoids. The FAD-dependent monooxygenase atnJ then performs an oxidative decarboxylation at C11 of the atnH/atnG product, via an electrophilic aromatic hydroxylation with concomitant ipso-decarboxylation. The membrane-bound polyprenyl transferase atnF then introduces a farnesyl group before the FAD-dependent monooxygenase atnK functions as the first epoxidase on terminal C12'-C13' olefin, followed by a second epoxidation on C7'-C8' catalyzed by atnA. The terpene cyclase/mutase atnI then initiates the sequential tricyclic ring formation through protonation of the terminal epoxide and catalyzes the regioselective and stereoselective 6/6/6-tricyclic ring formation. The cytochrome P450 monooxygenase atnM is responsible for hydroxylating both C1' and C10'. The next steps may involve ketoreduction and acetyl transfer by the ketoreductase atnB and the acetyltransferase atnC, and lead to the production of arthripenoid B, the final biosynthetic product of the atn cluster. The hydroquinone moiety in arthripenoid B is prone to undergo spontaneous oxidation to afford a benzoquinone compound, a key intermediate for generating structure diversity. For instance, addition of a cysteine followed by ring contraction gives arthripenoid A, tautomerization gives the main product arthripenoid C, addition of a molecular of water or amine affords arthripenoid D or E, respectively, and loss of one water forms arthripenoid F. The protein is Short-chain dehydrogenase/reductase atnB of Arthrinium sp.